Reading from the N-terminus, the 416-residue chain is Notoamide biosynthesis cluster protein N' (416 aa).

The N-terminal stretch at 1–16 (MRAALLTLAFTALAAA) is a signal peptide. Asn-119 and Asn-262 each carry an N-linked (GlcNAc...) asparagine glycan.

Functionally, part of the gene cluster that mediates the biosynthesis of notoamide, a fungal indole alkaloid that belongs to a family of natural products containing a characteristic bicyclo[2.2.2]diazaoctane core. The first step of notoamide biosynthesis involves coupling of L-proline and L-tryptophan by the bimodular NRPS notE', to produce cyclo-L-tryptophan-L-proline called brevianamide F. The reverse prenyltransferase notF' then acts as a deoxybrevianamide E synthase and converts brevianamide F to deoxybrevianamide E via reverse prenylation at C-2 of the indole ring leading to the bicyclo[2.2.2]diazaoctane core. Deoxybrevianamide E is further hydroxylated at C-6 of the indole ring, likely catalyzed by the cytochrome P450 monooxygenase notG', to yield 6-hydroxy-deoxybrevianamide E. 6-hydroxy-deoxybrevianamide E is a specific substrate of the prenyltransferase notC' for normal prenylation at C-7 to produce 6-hydroxy-7-prenyl-deoxybrevianamide, also called notoamide S. As the proposed pivotal branching point in notoamide biosynthesis, notoamide S can be diverted to notoamide E through an oxidative pyran ring closure putatively catalyzed by either notH' cytochrome P450 monooxygenase or the notD' FAD-linked oxidoreductase. This step would be followed by an indole 2,3-epoxidation-initiated pinacol-like rearrangement catalyzed by the notB' FAD-dependent monooxygenase leading to the formation of notoamide C and notoamide D. On the other hand notoamide S is converted to notoamide T by notH' (or notD'), a bifunctional oxidase that also functions as the intramolecular Diels-Alderase responsible for generation of (-)-notoamide T. To generate antipodal (+)-notoaminide T, notH (or notD) in Aspergillus strain MF297-2 is expected to catalyze a Diels-Alder reaction leading to the opposite stereochemistry. The remaining oxidoreductase notD' (or notH') likely catalyzes the oxidative pyran ring formation to yield (-)-stephacidin A. The FAD-dependent monooxygenase notI' is highly similar to notB' and is predicted to catalyze a similar conversion from (-)-stephacidin A to (+)-notoamide B via the 2,3-epoxidation of (-)-stephacidin A followed by a pinacol-type rearrangement. Finally, it remains unclear which enzyme could be responsible for the final hydroxylation steps leading to notoamide A and sclerotiamide. The function of notN' in the notoamide biosynthesis has not been determined yet. This is Notoamide biosynthesis cluster protein N' from Aspergillus versicolor.